Reading from the N-terminus, the 565-residue chain is Urocanate hydratase (565 aa).

NAD(+) is bound by residues 61–62 (GG), Gln139, 185–187 (GMG), Glu205, Arg210, 251–252 (NA), 272–276 (QTSAH), 282–283 (YL), and Tyr331. Cys419 is a catalytic residue. The tract at residues 453–472 (LDSGSVSSPNRETESMKDGS) is disordered. The span at 463–472 (RETESMKDGS) shows a compositional bias: basic and acidic residues. Gly501 contributes to the NAD(+) binding site.

This sequence belongs to the urocanase family. The cofactor is NAD(+).

The protein localises to the cytoplasm. It carries out the reaction 4-imidazolone-5-propanoate = trans-urocanate + H2O. The protein operates within amino-acid degradation; L-histidine degradation into L-glutamate; N-formimidoyl-L-glutamate from L-histidine: step 2/3. Functionally, catalyzes the conversion of urocanate to 4-imidazolone-5-propionate. The protein is Urocanate hydratase of Pseudomonas syringae.